Reading from the N-terminus, the 359-residue chain is Apelin receptor B (359 aa).

Over 1–36 (MNAMDNMTADYSPDYFDDAVNSSMCEYDEWEPSYSL) the chain is Extracellular. N-linked (GlcNAc...) asparagine glycans are attached at residues Asn6 and Asn21. Cystine bridges form between Cys25-Cys288 and Cys107-Cys186. The helical transmembrane segment at 37 to 57 (IPVLYMLIFILGLTGNGVVIF) threads the bilayer. Over 58–75 (TVWRAQSKRRAADVYIGN) the chain is Cytoplasmic. A helical transmembrane segment spans residues 76 to 96 (LALADLTFVVTLPLWAVYTAL). Residues 97 to 108 (GYHWPFGVALCK) lie on the Extracellular side of the membrane. The chain crosses the membrane as a helical span at residues 109–129 (ISSYVVLLNMYASVFCLTCLS). The Cytoplasmic segment spans residues 130 to 151 (LDRYMAIVHSLTSTQLRTRGHM). A helical membrane pass occupies residues 152–172 (RASLTAIWLLSGVLAAPTLLF). Topologically, residues 173-213 (RTTVYDVETNRTSCAMDFNLVVSQPGQETYWIAGLSISSTA) are extracellular. Asn182 is a glycosylation site (N-linked (GlcNAc...) asparagine). Residues 214-234 (LGFLIPLLAMMVCYGFIGCTV) form a helical membrane-spanning segment. Residues 235–251 (TRHFNSLRKEDQRKRRL) are Cytoplasmic-facing. Residues 252–272 (LKIITTLVVVFAACWMPFHVV) form a helical membrane-spanning segment. The Extracellular portion of the chain corresponds to 273 to 286 (KTMDALSYLNLAPD). A helical membrane pass occupies residues 287 to 307 (SCTFLNLLLLAHPYATCLAYV). Residues 308–359 (NSCLNPLLYAFFDLRFRSQCLCLLNLKKALHASPASSLSSQKTEAQSLATKV) lie on the Cytoplasmic side of the membrane.

This sequence belongs to the G-protein coupled receptor 1 family. As to expression, mesendodermal expression at the blastoderm margin appears by 4.5 hpf. At early gastrulation, expression is maintained ventrolaterally while expression in dorsal cells and random deep cells declines. During gastrulation and segmentation, expression is maintained in adaxial, intermediate, and lateral plate mesoderm. During late segmentation, expressed in several regions including the forming heart. By 24 hpf, expressed in the dorsal aorta, caudal vein, and intersomitic blood vessels.

Its subcellular location is the cell membrane. Functionally, g protein-coupled receptor for peptide hormones apelin (apln) and apelin receptor early endogenous ligand (apela), that plays a role in the regulation of normal cardiovascular function and fluid homeostasis. When acting as apelin receptor, activates both G(i) protein pathway that inhibits adenylate cyclase activity, and the beta-arrestin pathway that promotes internalization of the receptor. Also functions as mechanoreceptor that is activated by pathological stimuli in a G-protein-independent fashion to induce beta-arrestin signaling, hence eliciting cardiac hypertrophy. However, the presence of apelin ligand blunts cardiac hypertrophic induction from APLNR/APJ on response to pathological stimuli. Plays a key role in early development such as gastrulation, blood vessels formation and heart morphogenesis by acting as a receptor for apela hormone, promoting endoderm and mesendoderm cell migration and regulating the migration of cells fated to become myocardial progenitors, respectively. Positively regulates angioblast migration toward the embryonic midline, i.e. the position of the future vessel formation, during vasculogenesis. May promote sinus venosus (SV)-derived endothelial cells migration into the developing heart to promote coronary blood vessel development. Required for cardiovascular development, particularly for intersomitic vein angiogenesis by acting as a receptor for apln hormone. Plays a role in various processes in adults such as regulation of blood vessel formation, blood pressure, heart contractility and heart failure. Acts redundantly with agtrl1a in heart development. Its function is as follows. G protein-coupled receptor for peptide hormones apelin (APLN) and apelin receptor early endogenous ligand (APELA/ELA), that plays a role in the regulation of normal cardiovascular function and fluid homeostasis. When acting as apelin receptor, activates both G(i) protein pathway that inhibits adenylate cyclase activity, and the beta-arrestin pathway that promotes internalization of the receptor. APLNR/APJ also functions as mechanoreceptor that is activated by pathological stimuli in a G-protein-independent fashion to induce beta-arrestin signaling, hence eliciting cardiac hypertrophy. Plays a key role in early development such as gastrulation, blood vessels formation and heart morphogenesis by acting as a APELA receptor. May promote angioblast migration toward the embryonic midline, i.e. the position of the future vessel formation, during vasculogenesis. Promotes sinus venosus (SV)-derived endothelial cells migration into the developing heart to promote coronary blood vessel development. Also plays a role in various processes in adults such as regulation of blood vessel formation, blood pressure, heart contractility and heart failure. In Danio rerio (Zebrafish), this protein is Apelin receptor B (aplnrb).